The sequence spans 467 residues: Cysteine--tRNA ligase (467 aa).

Residue Cys-28 participates in Zn(2+) binding. Residues 30–40 (MTVYDHCHLGH) carry the 'HIGH' region motif. Residues Cys-209, His-234, and Glu-238 each contribute to the Zn(2+) site. A 'KMSKS' region motif is present at residues 266–270 (KMSKS). Lys-269 contacts ATP.

It belongs to the class-I aminoacyl-tRNA synthetase family. Monomer. Zn(2+) is required as a cofactor.

It localises to the cytoplasm. It catalyses the reaction tRNA(Cys) + L-cysteine + ATP = L-cysteinyl-tRNA(Cys) + AMP + diphosphate. This is Cysteine--tRNA ligase from Nitrosomonas eutropha (strain DSM 101675 / C91 / Nm57).